We begin with the raw amino-acid sequence, 334 residues long: Holliday junction branch migration complex subunit RuvB (334 aa).

The tract at residues methionine 1 to tyrosine 181 is large ATPase domain (RuvB-L). Residues leucine 20, arginine 21, glycine 62, lysine 65, threonine 66, threonine 67, glutamate 128–phenylalanine 130, arginine 171, tyrosine 181, and arginine 218 each bind ATP. Position 66 (threonine 66) interacts with Mg(2+). The interval glutamine 182–aspartate 252 is small ATPAse domain (RuvB-S). Residues histidine 255–glutamate 334 form a head domain (RuvB-H) region. DNA-binding residues include arginine 291, arginine 310, arginine 312, and arginine 315.

It belongs to the RuvB family. As to quaternary structure, homohexamer. Forms an RuvA(8)-RuvB(12)-Holliday junction (HJ) complex. HJ DNA is sandwiched between 2 RuvA tetramers; dsDNA enters through RuvA and exits via RuvB. An RuvB hexamer assembles on each DNA strand where it exits the tetramer. Each RuvB hexamer is contacted by two RuvA subunits (via domain III) on 2 adjacent RuvB subunits; this complex drives branch migration. In the full resolvosome a probable DNA-RuvA(4)-RuvB(12)-RuvC(2) complex forms which resolves the HJ.

It is found in the cytoplasm. The catalysed reaction is ATP + H2O = ADP + phosphate + H(+). Functionally, the RuvA-RuvB-RuvC complex processes Holliday junction (HJ) DNA during genetic recombination and DNA repair, while the RuvA-RuvB complex plays an important role in the rescue of blocked DNA replication forks via replication fork reversal (RFR). RuvA specifically binds to HJ cruciform DNA, conferring on it an open structure. The RuvB hexamer acts as an ATP-dependent pump, pulling dsDNA into and through the RuvAB complex. RuvB forms 2 homohexamers on either side of HJ DNA bound by 1 or 2 RuvA tetramers; 4 subunits per hexamer contact DNA at a time. Coordinated motions by a converter formed by DNA-disengaged RuvB subunits stimulates ATP hydrolysis and nucleotide exchange. Immobilization of the converter enables RuvB to convert the ATP-contained energy into a lever motion, pulling 2 nucleotides of DNA out of the RuvA tetramer per ATP hydrolyzed, thus driving DNA branch migration. The RuvB motors rotate together with the DNA substrate, which together with the progressing nucleotide cycle form the mechanistic basis for DNA recombination by continuous HJ branch migration. Branch migration allows RuvC to scan DNA until it finds its consensus sequence, where it cleaves and resolves cruciform DNA. This is Holliday junction branch migration complex subunit RuvB from Streptococcus uberis (strain ATCC BAA-854 / 0140J).